The chain runs to 462 residues: UPF0236 protein TTE2489 (462 aa).

It belongs to the UPF0236 family.

The protein is UPF0236 protein TTE2489 of Caldanaerobacter subterraneus subsp. tengcongensis (strain DSM 15242 / JCM 11007 / NBRC 100824 / MB4) (Thermoanaerobacter tengcongensis).